Here is a 368-residue protein sequence, read N- to C-terminus: Galanin receptor type 3 (368 aa).

Residues 1-20 (MADAQNISLDSPGSVGAVAV) are Extracellular-facing. The N-linked (GlcNAc...) asparagine glycan is linked to Asn-6. A helical transmembrane segment spans residues 21-41 (PVVFALIFLLGTVGNGLVLAV). Residues 42–57 (LLQPGPSAWQEPGSTT) are Cytoplasmic-facing. The helical transmembrane segment at 58 to 78 (DLFILNLAVADLCFILCCVPF) threads the bilayer. Residues 79-96 (QATIYTLDAWLFGALVCK) lie on the Extracellular side of the membrane. Cys-95 and Cys-172 are joined by a disulfide. The chain crosses the membrane as a helical span at residues 97-118 (AVHLLIYLTMYASSFTLAAVSV). Topologically, residues 119-138 (DRYLAVRHPLRSRALRTPRN) are cytoplasmic. The helical transmembrane segment at 139 to 159 (ARAAVGLVWLLAALFSAPYLS) threads the bilayer. At 160-184 (YYGTVRYGALELCVPAWEDARRRAL) the chain is on the extracellular side. The chain crosses the membrane as a helical span at residues 185 to 205 (DVATFAAGYLLPVAVVSLAYG). The Cytoplasmic portion of the chain corresponds to 206 to 236 (RTLRFLWAAVGPAGAAAAEARRRATGRAGRA). Residues 237–257 (MLAVAALYALCWGPHHALILC) traverse the membrane as a helical segment. Over 258–259 (FW) the chain is Extracellular. Residues 260-280 (YGRFAFSPATYACRLASHCLA) traverse the membrane as a helical segment. Over 281-368 (YANSCLNPLV…HGGEAARGPE (88 aa)) the chain is Cytoplasmic. The S-palmitoyl cysteine moiety is linked to residue Cys-308. The interval 317–368 (RRALRRVRPASSGPPGCPGDARPSGRLLAGGGQGPEPREGPVHGGEAARGPE) is disordered.

Belongs to the G-protein coupled receptor 1 family.

It localises to the cell membrane. In terms of biological role, receptor for the hormone galanin. Receptor for the hormone spexin-1. The chain is Galanin receptor type 3 (GALR3) from Homo sapiens (Human).